The following is a 593-amino-acid chain: Probable translation initiation factor IF-2 (593 aa).

A tr-type G domain is found at 7–221 (IRTPIVCVMG…VLIGLAQRYM (215 aa)). The segment at 16–23 (GHVDHGKT) is G1. Residue 16–23 (GHVDHGKT) participates in GTP binding. A G2 region spans residues 41–45 (EITQH). The tract at residues 77–80 (DTPG) is G3. GTP is bound by residues 77-81 (DTPGH) and 131-134 (NKVD). The segment at 131–134 (NKVD) is G4. Residues 199–201 (SAL) form a G5 region.

Belongs to the TRAFAC class translation factor GTPase superfamily. Classic translation factor GTPase family. IF-2 subfamily.

Functionally, function in general translation initiation by promoting the binding of the formylmethionine-tRNA to ribosomes. Seems to function along with eIF-2. In Methanoculleus marisnigri (strain ATCC 35101 / DSM 1498 / JR1), this protein is Probable translation initiation factor IF-2.